A 188-amino-acid chain; its full sequence is Ion-translocating oxidoreductase complex subunit B (188 aa).

A hydrophobic region spans residues methionine 1 to alanine 26. The 59-residue stretch at glutamine 32–leucine 90 folds into the 4Fe-4S domain. The [4Fe-4S] cluster site is built by cysteine 49, cysteine 52, cysteine 57, cysteine 73, cysteine 113, cysteine 116, cysteine 119, cysteine 123, cysteine 143, cysteine 146, cysteine 149, and cysteine 153. 4Fe-4S ferredoxin-type domains follow at residues arginine 104–arginine 133 and leucine 134–isoleucine 163.

The protein belongs to the 4Fe4S bacterial-type ferredoxin family. RnfB subfamily. The complex is composed of six subunits: RnfA, RnfB, RnfC, RnfD, RnfE and RnfG. It depends on [4Fe-4S] cluster as a cofactor.

The protein localises to the cell inner membrane. Functionally, part of a membrane-bound complex that couples electron transfer with translocation of ions across the membrane. This chain is Ion-translocating oxidoreductase complex subunit B, found in Pseudomonas aeruginosa (strain LESB58).